Here is a 2476-residue protein sequence, read N- to C-terminus: Non-reducing polyketide synthase pkdA (2476 aa).

The segment at 22-230 (PNLNDAYLQS…VISEARLATL (209 aa)) is N-terminal acylcarrier protein transacylase domain (SAT). The active-site Nucleophile; for transacylase activity is Cys-142. His-261 (proton donor/acceptor; for transacylase activity) is an active-site residue. One can recognise a Ketosynthase family 3 (KS3) domain in the interval 388–805 (DESIAVVGMA…GSNASLVVTQ (418 aa)). Active-site for beta-ketoacyl synthase activity residues include Cys-554, His-689, and His-728. Residues 919–1204 (FGGQRSSFVG…GSGVTNLASR (286 aa)) form a malonyl-CoA:ACP transacylase (MAT) region. The interval 1290-1417 (QKGLWTFVGY…GRITFQTPKQ (128 aa)) is N-terminal hotdog fold. Positions 1290–1592 (QKGLWTFVGY…FVEVSIAGMS (303 aa)) constitute a PKS/mFAS DH domain. The interval 1321–1590 (YVSAHVIAQT…LHFVEVSIAG (270 aa)) is product template (PT) domain. Catalysis depends on His-1325, which acts as the Proton acceptor; for dehydratase activity. Residues 1445–1592 (QTIQGSRNIY…FVEVSIAGMS (148 aa)) are C-terminal hotdog fold. Catalysis depends on Asp-1501, which acts as the Proton donor; for dehydratase activity. Residues 1626–1649 (DVSKNEKDAKAPSKKKESTSKSPG) form a disordered region. The Carrier domain maps to 1650–1724 (HDILARVRTL…SLVKCIGANM (75 aa)). Ser-1684 is modified (O-(pantetheine 4'-phosphoryl)serine). The segment at 1727–1766 (SDTSRTGDDSSDDLETASAESETSSGINNEDSHNIDRQQI) is disordered. Over residues 1742–1751 (TASAESETSS) the composition is skewed to low complexity. Positions 1881–2030 (ELLRQYPEHA…DCEKTPSSHL (150 aa)) are methyltransferase (CMeT) domain. An NADPH-binding domain region spans residues 2094–2340 (VTGATGSLGS…SWCPVDDVAA (247 aa)).

Pantetheine 4'-phosphate serves as cofactor.

It carries out the reaction propanoyl-CoA + 3 malonyl-CoA + AH2 + 2 S-adenosyl-L-methionine + H(+) = 2-ethyl-4,6-dihydroxy-3,5-dimethylbenzaldehyde + A + 2 S-adenosyl-L-homocysteine + 3 CO2 + 4 CoA + H2O. It participates in secondary metabolite biosynthesis. Functionally, non-reducing polyketide synthase that synthesizes 6-ethyl-2,4-dihydroxy-3,5-dimethylbenzaldehyde via condensation of one propanoyl-CoA starter unit with 3 malonyl-CoA units, as well as 2 methylation steps. The polypeptide is Non-reducing polyketide synthase pkdA (Emericella nidulans (strain FGSC A4 / ATCC 38163 / CBS 112.46 / NRRL 194 / M139) (Aspergillus nidulans)).